Consider the following 1197-residue polypeptide: Sensor protein EvgS (1197 aa).

The first 21 residues, 1–21, serve as a signal peptide directing secretion; it reads MKFLPYIFLLCCGLWSTISFA. Residues 22–325 lie on the Cytoplasmic side of the membrane; the sequence is DEDYIEYRGI…SMTDENGSVR (304 aa). The helical transmembrane segment at 326–346 threads the bilayer; it reads GVMGDILNIITLQTGLNFSPI. Residues 347–537 lie on the Periplasmic side of the membrane; the sequence is TVSHNIHAGT…TWDLYSEQFY (191 aa). A helical membrane pass occupies residues 538–558; that stretch reads IVTTLSVLLVGSSLLWGFYLL. The Cytoplasmic portion of the chain corresponds to 559–1197; it reads RSVRRRKVIQ…EIAVFCQKND (639 aa). A Histidine kinase domain is found at 718-938; that stretch reads TMSHEIRTPI…TFTITIPVEI (221 aa). Histidine 721 carries the phosphohistidine; by autocatalysis modification. A Response regulatory domain is found at 960 to 1074; sequence SILIADDHPT…VLKTHLSQLH (115 aa). Aspartate 1009 bears the 4-aspartylphosphate mark. The region spanning 1098 to 1197 is the HPt domain; that stretch reads DLQLMQEILM…EIAVFCQKND (100 aa). Residue histidine 1137 is modified to Phosphohistidine.

Post-translationally, activation requires a sequential transfer of a phosphate group from a His in the primary transmitter domain, to an Asp in the receiver domain and to a His in the secondary transmitter domain.

The protein resides in the cell inner membrane. It catalyses the reaction ATP + protein L-histidine = ADP + protein N-phospho-L-histidine.. Functionally, member of the two-component regulatory system EvgS/EvgA. Phosphorylates EvgA via a four-step phosphorelay in response to environmental signals. The protein is Sensor protein EvgS (evgS) of Escherichia coli (strain K12).